Consider the following 1421-residue polypeptide: ALK tyrosine kinase receptor homolog scd-2 (1421 aa).

A signal peptide spans 1–20 (MRKRRLWWFVVLFRVTLVGA). Residues 21–903 (ILPNETFDVR…DTCEEIQIWT (883 aa)) lie on the Extracellular side of the membrane. 6 N-linked (GlcNAc...) asparagine glycosylation sites follow: Asn-24, Asn-44, Asn-70, Asn-83, Asn-119, and Asn-201. The 39-residue stretch at 300-338 (QCSRGDQFLCSISANTRCLQNAQCDSRIDCDDESDEMDC) folds into the LDL-receptor class A domain. 3 cysteine pairs are disulfide-bonded: Cys-301/Cys-317, Cys-309/Cys-329, and Cys-323/Cys-338. The region spanning 339 to 542 (GNINGTMCDF…NLSFSPTCFE (204 aa)) is the MAM domain. Residues Asn-342, Asn-362, Asn-495, Asn-533, Asn-546, Asn-633, Asn-726, Asn-793, Asn-849, Asn-873, and Asn-893 are each glycosylated (N-linked (GlcNAc...) asparagine). A helical membrane pass occupies residues 904-924 (LYNITFLIFAALTIIGALFVV). The Cytoplasmic segment spans residues 925–1421 (YHYRNREKQM…SVPLLECQTR (497 aa)). Residues 976-1261 (IERGRVLGRG…GMPFPIHPAV (286 aa)) enclose the Protein kinase domain. ATP contacts are provided by residues 982-990 (LGRGNFGEV) and Lys-1003. Asp-1106 acts as the Proton acceptor in catalysis.

It belongs to the protein kinase superfamily. Tyr protein kinase family. Insulin receptor subfamily. In terms of assembly, interacts (via cytoplasmic domain) with fsn-1 (via SPRY domain). As to expression, expressed in AIA sensory neurons.

The protein resides in the cell membrane. It catalyses the reaction L-tyrosyl-[protein] + ATP = O-phospho-L-tyrosyl-[protein] + ADP + H(+). Functionally, probable tyrosine-protein kinase receptor which regulates the dauer/non-dauer developmental decision probably by controlling daf-3 transcriptional activity in parallel or together with the TGF-beta pathway. Regulates integration of conflicting sensory cues in AIA interneurons. May act as a receptor for hen-1. In AWA neurons, together with hen-1, plays a role in regulating olfactory adaptation by controlling the forgetting sensory responses to odorants such as diacetyl. The polypeptide is ALK tyrosine kinase receptor homolog scd-2 (Caenorhabditis elegans).